The primary structure comprises 329 residues: MGMLRAGLCPGLTEETVQLLRGRKIKTVADLAAADLEEVAQKCGLSYKALVALRRVLLAQFSAFPLNGADLYEELKTSTAILSTGIGSLDKLLDAGLYTGEVTEIVGGPGSGKTQVCLCVAANVAHSLQQNVLYVDSNGGMTASRLLQLLQARTQDEEKQASALQRIQVVRSFDIFRMLDMLQDLRGTIAQQEATSSGAVKVVIVDSVTAVVAPLLGGQQREGLALMMQLARELKILARDLGVAVVVTNHLTRDWDGRRFKPALGRSWSFVPSTRILLDVTEGAGTLGSSQRTVCLTKSPRQPTGLQEMIDIGTLGTEEQSPELPGKQT.

Residues 1-83 (MGMLRAGLCP…ELKTSTAILS (83 aa)) are preferentially binds ssDNA. Positions 4–77 (LRAGLCPGLT…GADLYEELKT (74 aa)) are interaction with XRCC2. The segment at 77–328 (TSTAILSTGI…EQSPELPGKQ (252 aa)) is interaction with RAD51C. 107-114 (GGPGSGKT) provides a ligand contact to ATP.

The protein belongs to the RecA family. RAD51 subfamily. Part of the BCDX2 complex consisting of RAD51B, RAD51C, RAD51D and XRCC2; the complex has a ring-like structure arranged into a flat disc around a central channel. In the absence of DNA, the BCDX2 subcomplex XRCC2:RAD51D formed a multimeric ring structure; in the presence of single-stranded DNA it formed a filamentous structure with the ssDNA. Interacts with SWSAP1 and ZSWIM7; involved in homologous recombination repair. Interacts with BLM; required for stimulation of BLM activity by the BCDX2 subcomplex XRCC2:RAD51D. As to expression, highly expressed in brain followed by testis. Also expressed in heart, liver, kidney, spleen, lung and skeletal muscle.

The protein resides in the nucleus. It localises to the chromosome. It is found in the telomere. Involved in the homologous recombination repair (HRR) pathway of double-stranded DNA breaks arising during DNA replication or induced by DNA-damaging agents. Bind to single-stranded DNA (ssDNA) and has DNA-dependent ATPase activity. Part of the RAD51 paralog protein complex BCDX2 which acts in the BRCA1-BRCA2-dependent HR pathway. Upon DNA damage, BCDX2 acts downstream of BRCA2 recruitment and upstream of RAD51 recruitment. BCDX2 binds predominantly to the intersection of the four duplex arms of the Holliday junction and to junction of replication forks. The BCDX2 complex was originally reported to bind single-stranded DNA, single-stranded gaps in duplex DNA and specifically to nicks in duplex DNA. Involved in telomere maintenance. The BCDX2 subcomplex XRCC2:RAD51D can stimulate Holliday junction resolution by BLM. This Mus musculus (Mouse) protein is DNA repair protein RAD51 homolog 4 (Rad51d).